A 505-amino-acid polypeptide reads, in one-letter code: NADH-quinone oxidoreductase subunit N (505 aa).

Helical transmembrane passes span 20–40 (ALAP…GDLF), 59–79 (ALAL…GGVF), 83–103 (GLAA…ALMS), 115–135 (GEYY…VSAG), 137–157 (AIVL…LVAL), 172–192 (FLMG…LYGL), 220–240 (AVVA…TVPF), 251–271 (APTT…FAVL), 285–305 (LWSD…NIAA), 314–334 (MLAY…AACT), 342–362 (AAYL…IIYL), 394–414 (LAAV…TAGF), 431–451 (ITVV…LGVA), and 481–501 (AVCL…LFWI).

Belongs to the complex I subunit 2 family. NDH-1 is composed of 14 different subunits. Subunits NuoA, H, J, K, L, M, N constitute the membrane sector of the complex.

It is found in the cell inner membrane. It carries out the reaction a quinone + NADH + 5 H(+)(in) = a quinol + NAD(+) + 4 H(+)(out). NDH-1 shuttles electrons from NADH, via FMN and iron-sulfur (Fe-S) centers, to quinones in the respiratory chain. The immediate electron acceptor for the enzyme in this species is believed to be ubiquinone. Couples the redox reaction to proton translocation (for every two electrons transferred, four hydrogen ions are translocated across the cytoplasmic membrane), and thus conserves the redox energy in a proton gradient. This Desulfovibrio desulfuricans (strain ATCC 27774 / DSM 6949 / MB) protein is NADH-quinone oxidoreductase subunit N.